A 294-amino-acid chain; its full sequence is Cuticle collagen 144 (294 aa).

An N-terminal signal peptide occupies residues 1-30; that stretch reads MEKILVTISTGAASFAVLAVLFTIPSLYNT. The span at 100 to 112 shows a compositional bias: pro residues; that stretch reads TCPPGPPGPPGQP. 2 disordered regions span residues 100–134 and 148–278; these read TCPP…TYAP and PQGP…GNDA. Triple-helical region stretches follow at residues 102–127 and 153–274; these read PPGP…KGED and GPEG…PGLP. 2 stretches are compositionally biased toward low complexity: residues 164–209 and 219–265; these read AGPD…PGQD and APGA…DGQP.

As to quaternary structure, collagen polypeptide chains are complexed within the cuticle by disulfide bonds and other types of covalent cross-links.

Its function is as follows. Nematode cuticles are composed largely of collagen-like proteins. The cuticle functions both as an exoskeleton and as a barrier to protect the worm from its environment. The polypeptide is Cuticle collagen 144 (Caenorhabditis briggsae).